The sequence spans 235 residues: Matrix protein (235 aa).

The protein belongs to the nucleorhabdovirus type-2 matrix protein family. In terms of assembly, homomultimer. Interacts with nucleoprotein and with the cytoplasmic domain of glycoprotein.

It localises to the virion membrane. Its subcellular location is the host endomembrane system. Functionally, plays a major role in assembly and budding of virion. Completely covers the ribonucleoprotein coil and keep it in condensed bullet-shaped form. Inhibits viral transcription and stimulates replication. This is Matrix protein (M) from Rottboellia (Sorghum).